The sequence spans 396 residues: Ribosomal RNA large subunit methyltransferase I (396 aa).

The PUA domain maps to 2-79 (SVRLVLAKGR…QAESIDIAFF (78 aa)).

Belongs to the methyltransferase superfamily. RlmI family.

It is found in the cytoplasm. The enzyme catalyses cytidine(1962) in 23S rRNA + S-adenosyl-L-methionine = 5-methylcytidine(1962) in 23S rRNA + S-adenosyl-L-homocysteine + H(+). Specifically methylates the cytosine at position 1962 (m5C1962) of 23S rRNA. The sequence is that of Ribosomal RNA large subunit methyltransferase I from Citrobacter koseri (strain ATCC BAA-895 / CDC 4225-83 / SGSC4696).